The sequence spans 267 residues: GTP cyclohydrolase FolE2 (267 aa).

This sequence belongs to the GTP cyclohydrolase IV family.

It carries out the reaction GTP + H2O = 7,8-dihydroneopterin 3'-triphosphate + formate + H(+). It participates in cofactor biosynthesis; 7,8-dihydroneopterin triphosphate biosynthesis; 7,8-dihydroneopterin triphosphate from GTP: step 1/1. Functionally, converts GTP to 7,8-dihydroneopterin triphosphate. In Nitrosomonas eutropha (strain DSM 101675 / C91 / Nm57), this protein is GTP cyclohydrolase FolE2.